A 1086-amino-acid chain; its full sequence is DNA polymerase (1086 aa).

Residues 638–657 form a disordered region; it reads STTRKPVDDVEEHSECNGFT.

Belongs to the DNA polymerase type-B family.

It carries out the reaction DNA(n) + a 2'-deoxyribonucleoside 5'-triphosphate = DNA(n+1) + diphosphate. In terms of biological role, replicates the viral genome. Host DNA polymerases cannot substitute for the viral enzyme in this process. This Noctuidae (owlet moths) protein is DNA polymerase.